Reading from the N-terminus, the 424-residue chain is Serine--tRNA ligase (424 aa).

231–233 is an L-serine binding site; that stretch reads TAE. Residues 262-264 and Val-278 contribute to the ATP site; that span reads RRE. Glu-285 lines the L-serine pocket. 349 to 352 is an ATP binding site; that stretch reads EVSS. Residue Ser-384 coordinates L-serine.

The protein belongs to the class-II aminoacyl-tRNA synthetase family. Type-1 seryl-tRNA synthetase subfamily. Homodimer. The tRNA molecule binds across the dimer.

The protein resides in the cytoplasm. The enzyme catalyses tRNA(Ser) + L-serine + ATP = L-seryl-tRNA(Ser) + AMP + diphosphate + H(+). It catalyses the reaction tRNA(Sec) + L-serine + ATP = L-seryl-tRNA(Sec) + AMP + diphosphate + H(+). The protein operates within aminoacyl-tRNA biosynthesis; selenocysteinyl-tRNA(Sec) biosynthesis; L-seryl-tRNA(Sec) from L-serine and tRNA(Sec): step 1/1. Functionally, catalyzes the attachment of serine to tRNA(Ser). Is also able to aminoacylate tRNA(Sec) with serine, to form the misacylated tRNA L-seryl-tRNA(Sec), which will be further converted into selenocysteinyl-tRNA(Sec). The polypeptide is Serine--tRNA ligase (Chlamydia abortus (strain DSM 27085 / S26/3) (Chlamydophila abortus)).